Here is a 299-residue protein sequence, read N- to C-terminus: Probable lipid kinase YegS (299 aa).

Residues 2-133 (ANFPASLLIL…IDMARVNDKT (132 aa)) enclose the DAGKc domain. Residues T40, 66 to 72 (GDGTINE), and T95 contribute to the ATP site. Positions 215, 218, and 220 each coordinate Mg(2+). E271 (proton acceptor) is an active-site residue.

Belongs to the diacylglycerol/lipid kinase family. YegS lipid kinase subfamily. Mg(2+) serves as cofactor. Requires Ca(2+) as cofactor.

The protein localises to the cytoplasm. Probably phosphorylates lipids; the in vivo substrate is unknown. The chain is Probable lipid kinase YegS from Salmonella gallinarum (strain 287/91 / NCTC 13346).